The primary structure comprises 123 residues: Chondroitin proteoglycan 8 (123 aa).

An N-terminal signal peptide occupies residues 1 to 16; the sequence is MRPFILLALLFSVAIA. The tract at residues 32–123 is disordered; sequence SVRRSTRGAD…SGSGDEAPAE (92 aa). Positions 38–60 are enriched in basic and acidic residues; sequence RGADKKADSSDSSDSNEKDDKVT. Serine 63 and serine 65 each carry an O-linked (Xyl...) (chondroitin sulfate) serine glycan. The span at 74-84 shows a compositional bias: basic and acidic residues; sequence EQLRRVARDVE. Serine 87, serine 93, and serine 114 each carry an O-linked (Xyl...) (chondroitin sulfate) serine glycan.

The polypeptide is Chondroitin proteoglycan 8 (cpg-8) (Caenorhabditis briggsae).